The chain runs to 166 residues: Crossover junction endodeoxyribonuclease RuvC (166 aa).

Residues aspartate 7, glutamate 68, and aspartate 141 contribute to the active site. 3 residues coordinate Mg(2+): aspartate 7, glutamate 68, and aspartate 141.

Belongs to the RuvC family. As to quaternary structure, homodimer which binds Holliday junction (HJ) DNA. The HJ becomes 2-fold symmetrical on binding to RuvC with unstacked arms; it has a different conformation from HJ DNA in complex with RuvA. In the full resolvosome a probable DNA-RuvA(4)-RuvB(12)-RuvC(2) complex forms which resolves the HJ. It depends on Mg(2+) as a cofactor.

The protein localises to the cytoplasm. It carries out the reaction Endonucleolytic cleavage at a junction such as a reciprocal single-stranded crossover between two homologous DNA duplexes (Holliday junction).. Its function is as follows. The RuvA-RuvB-RuvC complex processes Holliday junction (HJ) DNA during genetic recombination and DNA repair. Endonuclease that resolves HJ intermediates. Cleaves cruciform DNA by making single-stranded nicks across the HJ at symmetrical positions within the homologous arms, yielding a 5'-phosphate and a 3'-hydroxyl group; requires a central core of homology in the junction. The consensus cleavage sequence is 5'-(A/T)TT(C/G)-3'. Cleavage occurs on the 3'-side of the TT dinucleotide at the point of strand exchange. HJ branch migration catalyzed by RuvA-RuvB allows RuvC to scan DNA until it finds its consensus sequence, where it cleaves and resolves the cruciform DNA. The chain is Crossover junction endodeoxyribonuclease RuvC from Caldicellulosiruptor saccharolyticus (strain ATCC 43494 / DSM 8903 / Tp8T 6331).